We begin with the raw amino-acid sequence, 177 residues long: Translation initiation factor IF-3 (177 aa).

Belongs to the IF-3 family. Monomer.

It is found in the cytoplasm. IF-3 binds to the 30S ribosomal subunit and shifts the equilibrium between 70S ribosomes and their 50S and 30S subunits in favor of the free subunits, thus enhancing the availability of 30S subunits on which protein synthesis initiation begins. This chain is Translation initiation factor IF-3, found in Synechocystis sp. (strain ATCC 27184 / PCC 6803 / Kazusa).